Consider the following 530-residue polypeptide: DEK domain-containing chromatin-associated protein 2 (530 aa).

Composition is skewed to basic and acidic residues over residues 1-47 (MATE…AEEE) and 57-68 (AKEGELGEKDKE). Residues 1–130 (MATETLDEKT…PSKSVSIEKG (130 aa)) are disordered. Positions 41 to 61 (IGEAEEEKKEDEEEGEAKEGE) form a coiled coil. Residues 69 to 82 (DDVESEEEEEEEEG) are compositionally biased toward acidic residues. 2 stretches are compositionally biased toward basic and acidic residues: residues 83–93 (SGSKKSSEKET) and 100–110 (RPTRERKKVER). A coiled-coil region spans residues 185-205 (EKEEEKQRARIKEKIDKCVKE). The segment at 246–430 (IIADQEKAKK…GKAKAEPTRK (185 aa)) is disordered. Residues 253 to 263 (AKKRKSTPKRG) are compositionally biased toward basic residues. The Nuclear localization signal 1 motif lies at 260–267 (PKRGKSGE). A compositionally biased stretch (acidic residues) spans 286-332 (SDTEEGKDEGDADSEGTNDPHEEDDAAPEEESDHEKTDTDDEKDEVE). 2 consecutive short sequence motifs (nuclear localization signal) follow at residues 343-350 (SKKTVEES) and 384-391 (AKKQKVDH). The segment covering 374–384 (KQIAKSTSSPA) has biased composition (polar residues). The segment covering 387–397 (QKVDHVESSKE) has biased composition (basic and acidic residues). One can recognise a DEK-C domain in the interval 426 to 481 (EPTRKEMLEVVSKILKEVDFNTATLSDILQKLSDHFGVELSHRKPEVKDVITEAIN). 2 DNA-binding regions span residues 444–458 (DFNT…QKLS) and 473–477 (KDVIT). A disordered region spans residues 482-530 (AMTDDEEEDEEEEAEAGSDKEKEEVKGEEEEEKAEAESDKEKEKEEPKD). Residues 484 to 497 (TDDEEEDEEEEAEA) are compositionally biased toward acidic residues. The stretch at 492-527 (EEEAEAGSDKEKEEVKGEEEEEKAEAESDKEKEKEE) forms a coiled coil. A compositionally biased stretch (basic and acidic residues) spans 516–530 (EAESDKEKEKEEPKD).

Found in a mRNA splicing-dependent exon junction complex (EJC). Binds specifically histones H3 and H4.

The protein resides in the nucleus. It localises to the nucleolus. Functionally, chromatin-associated protein which contributes to the modulation of chromatin structure (such as super-helical structure of DNA) and function. Binds to chromatin of protein-coding genes throughout the genome to regulate nucleosome occupancy and chromatin accessibility, and to modulate the expression of target genes. This chain is DEK domain-containing chromatin-associated protein 2, found in Arabidopsis thaliana (Mouse-ear cress).